Reading from the N-terminus, the 58-residue chain is MFELDAQRLAERIDTVLDILVAGDTHSAIHNLEILKAELLSKVKDNAQSGTPKSPWEI.

The protein belongs to the UPF0509 family.

The polypeptide is UPF0509 protein YciZ (Escherichia fergusonii (strain ATCC 35469 / DSM 13698 / CCUG 18766 / IAM 14443 / JCM 21226 / LMG 7866 / NBRC 102419 / NCTC 12128 / CDC 0568-73)).